The following is a 277-amino-acid chain: uncharacterized protein (277 aa).

Disordered stretches follow at residues 33–168 (KNDN…VTTR) and 210–277 (NKLL…PIEF). Basic and acidic residues predominate over residues 34 to 45 (NDNDERTAHEES). Residues 86 to 99 (LKSKSKRKTKKGGS) are compositionally biased toward basic residues. Composition is skewed to basic and acidic residues over residues 100 to 113 (KPREENVNTEKHIV), 151 to 168 (AKELSYDELKDKLEVTTR), and 216 to 230 (TNEDEINKSQRNKEK). Basic residues predominate over residues 231–241 (DRKRRERRTAR). Residues 242-258 (RKDERKQEKKQEKKQDN) show a composition bias toward basic and acidic residues. The span at 259 to 271 (KTSQSFPSSTDMN) shows a compositional bias: polar residues.

The protein resides in the cytoplasm. This is an uncharacterized protein from Saccharomyces cerevisiae (strain ATCC 204508 / S288c) (Baker's yeast).